The chain runs to 275 residues: uncharacterized protein (275 aa).

The next 3 membrane-spanning stretches (helical) occupy residues 15–35 (LFLP…FLGS), 39–59 (AIMI…FGLF), and 70–90 (ILYL…VVYL). Residues 140–191 (SSKTDMDSQVAEAPQTEEGEPSVNQVPQEAGASHRVGPYQDQGLATDRNGNP) are disordered.

The protein localises to the mitochondrion membrane. This is an uncharacterized protein from Arabidopsis thaliana (Mouse-ear cress).